Consider the following 201-residue polypeptide: Recombination protein RecR (201 aa).

Residues 57–72 (CCDCRTFTEEERCTIC) form a C4-type zinc finger. The Toprim domain occupies 81–176 (GQICVVESPA…AASRIAHGVP (96 aa)).

Belongs to the RecR family.

May play a role in DNA repair. It seems to be involved in an RecBC-independent recombinational process of DNA repair. It may act with RecF and RecO. This chain is Recombination protein RecR, found in Proteus mirabilis (strain HI4320).